Here is a 214-residue protein sequence, read N- to C-terminus: MVFNLFRISADLVHLLSIYFLLTKIISHKNCIGISLRSQILFFIVWVTRYLDIFYNFYSLYNTILKIVYLTTSAYTIYLISKRFRATYDKIHDTLNVWYLIVPCIVLAFIFTEDYSITEICWTFSIFLEAVAILPQILLLRSTGEVENLNSQYIFCLGLYRALYIINWIYRYATEQSYWSPLTWICGSIQTLLYVEYFYYYIKSRVEGTKFVLP.

The Lumenal segment spans residues Met1 to Asn4. Residues Leu5–Thr23 traverse the membrane as a helical segment. At Lys24 to Arg37 the chain is on the cytoplasmic side. Residues Ser38–Tyr55 traverse the membrane as a helical segment. Residues Asn56–Thr63 lie on the Lumenal side of the membrane. A helical membrane pass occupies residues Ile64–Lys82. Residues Arg83 to Trp98 lie on the Cytoplasmic side of the membrane. Residues Tyr99–Thr112 traverse the membrane as a helical segment. The Lumenal portion of the chain corresponds to Glu113–Glu119. Residues Ile120–Leu139 traverse the membrane as a helical segment. Topologically, residues Leu140–Ser151 are cytoplasmic. The chain crosses the membrane as a helical span at residues Gln152 to Tyr170. At Arg171 to Pro181 the chain is on the lumenal side. The helical transmembrane segment at Leu182–Ile202 threads the bilayer. Residues Lys203–Pro214 are Cytoplasmic-facing.

This sequence belongs to the ERD2 family.

The protein resides in the endoplasmic reticulum membrane. Functionally, required for the retention of luminal endoplasmic reticulum proteins. Determines the specificity of the luminal ER protein retention system. Also required for normal vesicular traffic through the Golgi. This is ER lumen protein-retaining receptor from Entamoeba histolytica (strain ATCC 30459 / HM-1:IMSS / ABRM).